A 445-amino-acid polypeptide reads, in one-letter code: tRNA modification GTPase MnmE (445 aa).

The (6S)-5-formyl-5,6,7,8-tetrahydrofolate site is built by Arg20, Glu79, and Lys119. In terms of domain architecture, TrmE-type G spans 215-371; that stretch reads GLKLAIIGPP…ILKNIEEIAE (157 aa). Asn225 serves as a coordination point for K(+). GTP-binding positions include 225-230, 244-250, and 269-272; these read NAGKSS, SNIAGTT, and DTAG. Ser229 contributes to the Mg(2+) binding site. Ser244, Ile246, and Thr249 together coordinate K(+). Thr250 contributes to the Mg(2+) binding site. Lys445 is a (6S)-5-formyl-5,6,7,8-tetrahydrofolate binding site.

It belongs to the TRAFAC class TrmE-Era-EngA-EngB-Septin-like GTPase superfamily. TrmE GTPase family. In terms of assembly, homodimer. Heterotetramer of two MnmE and two MnmG subunits. Requires K(+) as cofactor.

It is found in the cytoplasm. In terms of biological role, exhibits a very high intrinsic GTPase hydrolysis rate. Involved in the addition of a carboxymethylaminomethyl (cmnm) group at the wobble position (U34) of certain tRNAs, forming tRNA-cmnm(5)s(2)U34. This chain is tRNA modification GTPase MnmE, found in Rickettsia bellii (strain OSU 85-389).